The sequence spans 988 residues: UPF0182 protein MAB_3498c (988 aa).

7 helical membrane passes run Leu-19–Thr-39, Leu-63–Leu-83, Leu-114–Tyr-134, Phe-176–Ile-196, Ile-211–Asp-231, Lys-260–Leu-280, and Ile-288–Val-308.

Belongs to the UPF0182 family.

The protein localises to the cell membrane. This chain is UPF0182 protein MAB_3498c, found in Mycobacteroides abscessus (strain ATCC 19977 / DSM 44196 / CCUG 20993 / CIP 104536 / JCM 13569 / NCTC 13031 / TMC 1543 / L948) (Mycobacterium abscessus).